The sequence spans 48 residues: MARFPEAEARTLNLQICRKCNARNALRATRCRKCGYEGLRPKKKELKK.

It belongs to the eukaryotic ribosomal protein eL40 family.

The polypeptide is Large ribosomal subunit protein eL40 (Methanocella arvoryzae (strain DSM 22066 / NBRC 105507 / MRE50)).